The primary structure comprises 214 residues: tRNA (guanine-N(7)-)-methyltransferase (214 aa).

S-adenosyl-L-methionine contacts are provided by Asp-35, Glu-60, Asn-87, and Asp-113. Residue Asp-113 is part of the active site. Substrate is bound by residues Lys-117 and Asp-149.

The protein belongs to the class I-like SAM-binding methyltransferase superfamily. TrmB family.

The catalysed reaction is guanosine(46) in tRNA + S-adenosyl-L-methionine = N(7)-methylguanosine(46) in tRNA + S-adenosyl-L-homocysteine. It participates in tRNA modification; N(7)-methylguanine-tRNA biosynthesis. In terms of biological role, catalyzes the formation of N(7)-methylguanine at position 46 (m7G46) in tRNA. In Prochlorococcus marinus (strain NATL2A), this protein is tRNA (guanine-N(7)-)-methyltransferase.